The following is a 307-amino-acid chain: Methionyl-tRNA formyltransferase (307 aa).

108 to 111 (SLLP) provides a ligand contact to (6S)-5,6,7,8-tetrahydrofolate.

The protein belongs to the Fmt family.

The catalysed reaction is L-methionyl-tRNA(fMet) + (6R)-10-formyltetrahydrofolate = N-formyl-L-methionyl-tRNA(fMet) + (6S)-5,6,7,8-tetrahydrofolate + H(+). Its function is as follows. Attaches a formyl group to the free amino group of methionyl-tRNA(fMet). The formyl group appears to play a dual role in the initiator identity of N-formylmethionyl-tRNA by promoting its recognition by IF2 and preventing the misappropriation of this tRNA by the elongation apparatus. This Stenotrophomonas maltophilia (strain K279a) protein is Methionyl-tRNA formyltransferase.